Consider the following 393-residue polypeptide: S-adenosylmethionine synthase (393 aa).

H17 contacts ATP. D19 contributes to the Mg(2+) binding site. Residue E45 coordinates K(+). L-methionine-binding residues include E58 and Q106. A flexible loop region spans residues 106 to 116; sequence QSAHIAQGVDA. ATP is bound by residues 171-173, 237-238, D246, 252-253, A269, and K273; these read DAK, KF, and RK. D246 provides a ligand contact to L-methionine. K277 serves as a coordination point for L-methionine.

This sequence belongs to the AdoMet synthase family. Homotetramer; dimer of dimers. Mg(2+) is required as a cofactor. It depends on K(+) as a cofactor.

The protein localises to the cytoplasm. The enzyme catalyses L-methionine + ATP + H2O = S-adenosyl-L-methionine + phosphate + diphosphate. It functions in the pathway amino-acid biosynthesis; S-adenosyl-L-methionine biosynthesis; S-adenosyl-L-methionine from L-methionine: step 1/1. Its function is as follows. Catalyzes the formation of S-adenosylmethionine (AdoMet) from methionine and ATP. The overall synthetic reaction is composed of two sequential steps, AdoMet formation and the subsequent tripolyphosphate hydrolysis which occurs prior to release of AdoMet from the enzyme. This chain is S-adenosylmethionine synthase, found in Ruegeria sp. (strain TM1040) (Silicibacter sp.).